The following is a 354-amino-acid chain: Probable N-acetylmuramoyl-L-alanine amidase (354 aa).

The signal sequence occupies residues 1-39 (MVKVINNFVKVNQYDRPGLKLAAVKGIVMHWTATPGASA). In terms of domain architecture, N-acetylmuramoyl-L-alanine amidase spans 40 to 152 (LNERNYFNGT…YDVTNKGCPT (113 aa)).

This sequence belongs to the N-acetylmuramoyl-L-alanine amidase 2 family.

The protein resides in the secreted. It catalyses the reaction Hydrolyzes the link between N-acetylmuramoyl residues and L-amino acid residues in certain cell-wall glycopeptides.. The polypeptide is Probable N-acetylmuramoyl-L-alanine amidase (Bacillus licheniformis).